Here is a 643-residue protein sequence, read N- to C-terminus: Phosphomethylpyrimidine synthase (643 aa).

Substrate-binding positions include asparagine 248, methionine 277, tyrosine 306, histidine 342, 362–364, 403–406, and glutamate 442; these read SRG and DGLR. Residue histidine 446 coordinates Zn(2+). Tyrosine 469 contacts substrate. Zn(2+) is bound at residue histidine 510. [4Fe-4S] cluster contacts are provided by cysteine 590, cysteine 593, and cysteine 598.

The protein belongs to the ThiC family. Homodimer. Requires [4Fe-4S] cluster as cofactor.

It carries out the reaction 5-amino-1-(5-phospho-beta-D-ribosyl)imidazole + S-adenosyl-L-methionine = 4-amino-2-methyl-5-(phosphooxymethyl)pyrimidine + CO + 5'-deoxyadenosine + formate + L-methionine + 3 H(+). Its pathway is cofactor biosynthesis; thiamine diphosphate biosynthesis. Catalyzes the synthesis of the hydroxymethylpyrimidine phosphate (HMP-P) moiety of thiamine from aminoimidazole ribotide (AIR) in a radical S-adenosyl-L-methionine (SAM)-dependent reaction. The sequence is that of Phosphomethylpyrimidine synthase from Burkholderia orbicola (strain MC0-3).